Here is a 49-residue protein sequence, read N- to C-terminus: Small, acid-soluble spore protein O (49 aa).

Residues 1-49 (MGKRKANHTISGMNVASAQGQGTGYNEEFANEPLTPAERQNNKKRKKNQ) form a disordered region. A compositionally biased stretch (polar residues) spans 8–20 (HTISGMNVASAQG).

This sequence belongs to the SspO family.

Its subcellular location is the spore core. The sequence is that of Small, acid-soluble spore protein O from Bacillus cereus (strain G9842).